A 244-amino-acid chain; its full sequence is Probable phosphatase NT01CX_1282 (244 aa).

Residues His-8, His-10, His-16, His-41, Glu-74, His-102, His-132, Asp-193, and His-195 each contribute to the Zn(2+) site.

Belongs to the PHP family. It depends on Zn(2+) as a cofactor.

The polypeptide is Probable phosphatase NT01CX_1282 (Clostridium novyi (strain NT)).